Consider the following 108-residue polypeptide: Anthranilate 1,2-dioxygenase ferredoxin subunit (108 aa).

The region spanning 9 to 105 (WHPLGAIDEF…IRIVDGQVEV (97 aa)) is the Rieske domain. 4 residues coordinate [2Fe-2S] cluster: Cys-49, His-51, Cys-68, and His-71.

This sequence belongs to the bacterial ring-hydroxylating dioxygenase ferredoxin component family. As to quaternary structure, part of a multicomponent enzyme system composed of a reductase (AndAa), a ferredoxin (AndAb) and a two-subunit oxygenase component (AndAc and AndAd). It depends on [2Fe-2S] cluster as a cofactor.

Its pathway is aromatic compound metabolism; anthranilate degradation via hydroxylation; catechol from anthranilate: step 1/1. Part of the multicomponent anthranilate dioxygenase, that converts anthranilate to catechol. This protein seems to be a 2Fe-2S ferredoxin. The sequence is that of Anthranilate 1,2-dioxygenase ferredoxin subunit from Burkholderia cepacia (Pseudomonas cepacia).